The following is an 89-amino-acid chain: Small ribosomal subunit protein uS15 (89 aa).

Over residues 1–11 the composition is skewed to basic and acidic residues; it reads MSITAERKAEV. The segment at 1–24 is disordered; that stretch reads MSITAERKAEVIKTNAKKAGDTGS.

Belongs to the universal ribosomal protein uS15 family. In terms of assembly, part of the 30S ribosomal subunit. Forms a bridge to the 50S subunit in the 70S ribosome, contacting the 23S rRNA.

Functionally, one of the primary rRNA binding proteins, it binds directly to 16S rRNA where it helps nucleate assembly of the platform of the 30S subunit by binding and bridging several RNA helices of the 16S rRNA. In terms of biological role, forms an intersubunit bridge (bridge B4) with the 23S rRNA of the 50S subunit in the ribosome. This chain is Small ribosomal subunit protein uS15, found in Afipia carboxidovorans (strain ATCC 49405 / DSM 1227 / KCTC 32145 / OM5) (Oligotropha carboxidovorans).